The chain runs to 1374 residues: Tripeptidyl-peptidase 2 (1374 aa).

One can recognise a Peptidase S8 domain in the interval 62-558; that stretch reads ALLLNKTDTE…QGMIKIATAY (497 aa). Catalysis depends on charge relay system residues aspartate 93, histidine 314, and serine 499.

The protein belongs to the peptidase S8 family. As to expression, expressed in intestinal fat-storing cells and some head neurons.

The enzyme catalyses Release of an N-terminal tripeptide from a polypeptide.. Its function is as follows. Component of the proteolytic cascade acting downstream of the 26S proteasome in the ubiquitin-proteasome pathway. Has a role in regulation of fat storage. This is Tripeptidyl-peptidase 2 (tpp-2) from Caenorhabditis elegans.